Reading from the N-terminus, the 116-residue chain is C-C motif chemokine 6 (116 aa).

Positions 1–21 are cleaved as a signal peptide; the sequence is MRNSKTAISFFILVAVLGSQA. Disulfide bonds link Cys50/Cys73, Cys51/Cys89, and Cys60/Cys100.

This sequence belongs to the intercrine beta (chemokine CC) family. In terms of processing, the N-terminal is proteolytically cleaved by proteases associated with inflammatory responses. The processed forms CL6(22-95) and CCL6(23-95) show increase in CCR1-mediated signaling and chemotaxis assays in vitro. As to expression, expressed in myelopoietic bone marrow cultures stimulated by GM-CSF.

The protein localises to the secreted. Its function is as follows. Chemotactic factor that attracts mostly macrophage, but it can also attract B cells, CD4(+) lymphocytes and eosinophils. This Mus musculus (Mouse) protein is C-C motif chemokine 6 (Ccl6).